The following is a 302-amino-acid chain: Nucleotide-binding protein SERP0433 (302 aa).

G18 to S25 lines the ATP pocket. D69 to G72 provides a ligand contact to GTP.

It belongs to the RapZ-like family.

Functionally, displays ATPase and GTPase activities. This Staphylococcus epidermidis (strain ATCC 35984 / DSM 28319 / BCRC 17069 / CCUG 31568 / BM 3577 / RP62A) protein is Nucleotide-binding protein SERP0433.